The chain runs to 305 residues: Acyl transferase (305 aa).

Catalysis depends on charge relay system residues S114, D211, and H241.

It belongs to the LuxD family.

It participates in lipid metabolism; fatty acid reduction for biolumincescence. Functionally, acyl transferase is part of the fatty acid reductase system required for aldehyde biosynthesis; it produces fatty acids for the luminescent reaction. This Vibrio campbellii (strain ATCC BAA-1116) protein is Acyl transferase.